A 329-amino-acid polypeptide reads, in one-letter code: MEDLKEDIKFIVDETLDFGGLSPSDSHEEEDITVLVSPEKPLRRGLSHRSNPNAVAPALQGVRFSLGPLSPEKLEEILDEANRLAAQLEECALKDSENAAAGPGRPSPRGKPSPRRETFVLKDSPVRDLLPTVSSWSAPPPSNLTGLRSSDKKGSARAGRVTAGKKPSSIKKESPTCNLFSASKNPGRSPLAQPTLPPRRKTGSGARTVASPPIPVRPAPQSSASNSQCSSWLQGAAAKSSSRLPFPSAIPKPAIRMPLTGRSIPAGKGALAPDPLPTQKGHPSTVGHRAPVSQRTNLPTIGAARGRTSSAARGRVQPLRKAAVPGPTR.

The residue at position 22 (Ser-22) is a Phosphoserine. Copy 1 of the repeat occupies 38–41; it reads PEKP. Ser-47, Ser-65, and Ser-70 each carry phosphoserine. A run of 2 repeats spans residues 68–71 and 103–106. The tract at residues 68 to 215 is 5 X 4 AA repeats of P-X-X-P; the sequence is PLSPEKLEEI…ARTVASPPIP (148 aa). Residues 70 to 94 are a coiled coil; it reads SPEKLEEILDEANRLAAQLEECALK. Residues 94-329 form a disordered region; that stretch reads KDSENAAAGP…RKAAVPGPTR (236 aa). Residues 114–126 are compositionally biased toward basic and acidic residues; sequence PRRETFVLKDSPV. At Ser-124 the chain carries Phosphoserine. 2 stretches are compositionally biased toward polar residues: residues 132 to 148 and 175 to 186; these read TVSS…TGLR and PTCNLFSASKNP. Thr-145 is modified (phosphothreonine). The residue at position 189 (Ser-189) is a Phosphoserine. 2 tandem repeats follow at residues 194-197 and 212-215. Low complexity-rich tracts occupy residues 219 to 231 and 302 to 315; these read APQS…QCSS and GAAR…ARGR.

The protein belongs to the PSRC1 family. Interacts with APC2. Interacts with KIF2A. Interacts with ANKRD53; recruits ANKRD53 to the spindle during mitosis. Phosphorylated during mitosis.

The protein resides in the cytoplasm. It localises to the cytoskeleton. Its subcellular location is the spindle. The protein localises to the spindle pole. Its function is as follows. Required for normal progression through mitosis. Required for normal congress of chromosomes at the metaphase plate, and for normal rate of chromosomal segregation during anaphase. Plays a role in the regulation of mitotic spindle dynamics. Increases the rate of turnover of microtubules on metaphase spindles, and contributes to the generation of normal tension across sister kinetochores. Recruits KIF2A and ANKRD53 to the mitotic spindle and spindle poles. May participate in p53/TP53-regulated growth suppression. This Rattus norvegicus (Rat) protein is Proline/serine-rich coiled-coil protein 1 (Psrc1).